Here is a 588-residue protein sequence, read N- to C-terminus: Solute carrier family 2, facilitated glucose transporter member 12 (588 aa).

The Cytoplasmic segment spans residues 1 to 28 (MLAHSTAQDLILQQRSSDDHPQTNPRQT). A helical transmembrane segment spans residues 29 to 49 (GCGAFIILSSVIAAISGLLVG). The Extracellular segment spans residues 50–74 (YELGIISGALLQLQSLLELTCQQQE). The chain crosses the membrane as a helical span at residues 75-95 (IVVSALLIGALVASLVGGCLI). Topologically, residues 96–103 (DLYGRRTT) are cytoplasmic. Residues 104 to 124 (IIFTSILLVFANLLPVVVVSY) traverse the membrane as a helical segment. The Extracellular portion of the chain corresponds to 125-131 (GSLIAGR). Residues 132 to 152 (IFIGVSISLSAIATCVYIAEL) traverse the membrane as a helical segment. Topologically, residues 153–158 (SPQDKR) are cytoplasmic. Residues 159-179 (GMLVSLNELMIVAGILLAYIC) traverse the membrane as a helical segment. Topologically, residues 180–191 (NYLFASVNNGWK) are extracellular. A helical transmembrane segment spans residues 192–212 (YMFGLITPLAALQAVAMFFLP). The Cytoplasmic portion of the chain corresponds to 213–272 (RSPRFLIMKGYDDAAGKVLQKLRATTDINEELTAIKSSIKAEYQYKFLDLFCSRDNMRAR). A helical membrane pass occupies residues 273-293 (LLIGLTLSFFVQITGQPNILF). Topologically, residues 294–311 (YASTVLKSVGFQSTEAAS) are extracellular. Residues 312-332 (LASTGIGVVKVVSTIPAIFLV) traverse the membrane as a helical segment. Over 333–339 (DKIGSKT) the chain is Cytoplasmic. The helical transmembrane segment at 340-360 (FLCIGSAVMAVSLVSVGLVSL) threads the bilayer. The Extracellular segment spans residues 361–459 (QLDVNYNNIC…IPEYMKWLCL (99 aa)). 3 N-linked (GlcNAc...) asparagine glycosylation sites follow: Asn377, Asn395, and Asn419. The chain crosses the membrane as a helical span at residues 460–480 (SSLLAFVAAFSIGLGPMAWLV). The Cytoplasmic portion of the chain corresponds to 481–492 (QSEIFPAGIKGR). A helical membrane pass occupies residues 493 to 513 (AFAITSSMNWGMNLLISLTFL). The Extracellular portion of the chain corresponds to 514–522 (TLTEMIGLP). A helical membrane pass occupies residues 523–543 (WMLFGYALMSIASLVFVIMFV). At 544–588 (PNTKGRPLEEISKELANRSYMCNAVCHRRRSKKKLTPVALIQSPA) the chain is on the cytoplasmic side.

Belongs to the major facilitator superfamily. Sugar transporter (TC 2.A.1.1) family. Glucose transporter subfamily.

It is found in the cell membrane. Its subcellular location is the endomembrane system. The protein localises to the cytoplasm. It localises to the perinuclear region. The enzyme catalyses D-glucose(out) = D-glucose(in). Its function is as follows. Insulin-regulated facilitative glucose transporter. This is Solute carrier family 2, facilitated glucose transporter member 12 from Xenopus laevis (African clawed frog).